Reading from the N-terminus, the 333-residue chain is Anthranilate phosphoribosyltransferase (333 aa).

5-phospho-alpha-D-ribose 1-diphosphate-binding positions include Gly-80, 83-84 (GD), Thr-88, 90-93 (NLST), 108-116 (KHGNRSASG), and Ser-120. Gly-80 contributes to the anthranilate binding site. Residue Ser-92 participates in Mg(2+) binding. Asn-111 provides a ligand contact to anthranilate. An anthranilate-binding site is contributed by Arg-166. 2 residues coordinate Mg(2+): Asp-224 and Glu-225.

It belongs to the anthranilate phosphoribosyltransferase family. Homodimer. The cofactor is Mg(2+).

It catalyses the reaction N-(5-phospho-beta-D-ribosyl)anthranilate + diphosphate = 5-phospho-alpha-D-ribose 1-diphosphate + anthranilate. It participates in amino-acid biosynthesis; L-tryptophan biosynthesis; L-tryptophan from chorismate: step 2/5. Catalyzes the transfer of the phosphoribosyl group of 5-phosphorylribose-1-pyrophosphate (PRPP) to anthranilate to yield N-(5'-phosphoribosyl)-anthranilate (PRA). The polypeptide is Anthranilate phosphoribosyltransferase (Pyrobaculum aerophilum (strain ATCC 51768 / DSM 7523 / JCM 9630 / CIP 104966 / NBRC 100827 / IM2)).